Reading from the N-terminus, the 463-residue chain is MNFPRIVIAGISSSSGKTTISSGITAALTKRGHKVAAYKCGPDYIDPGYLTLAADNPCHNLDSWMLGKDAMTEVFFHGLKNREIALVEGVMGLYDGYSGERPGGSTAEIARLLSAPVILLLNISHMAESAAAIVLGYKNLDPRINIAGVILNQAGSLRHYEICRKAIEKYTSTPVVGYLLRNKELAIPERHLGLKTTSEGGELASFIQNLAAHIESTIDIDRILNIARNAPPLPERPCPYLFPETPARPVTRIAIARDEAFSFYYQANLDMLSDWGAELCYFSPVHDTCLPENIGGIYIGGGFPEIMAAELSANQAMKTALTKAAEDGMPIYAECGGLMYLSEAIEDFDNNKYLMLGLLPGVSVMQKKLHRLGYTRAAVQNDNILSGKGTELRGHIFHWSKLPSPKTKPAYTLLEPAEYAGQNEGFIIGNSTNVLASYLHLHFGTNPDLAKNFIRVSKGFYAI.

Residues 252 to 448 (RIAIARDEAF…LHLHFGTNPD (197 aa)) enclose the GATase cobBQ-type domain. C335 acts as the Nucleophile in catalysis.

It belongs to the CobB/CbiA family. Mg(2+) is required as a cofactor.

It carries out the reaction cob(II)yrinate + 2 L-glutamine + 2 ATP + 2 H2O = cob(II)yrinate a,c diamide + 2 L-glutamate + 2 ADP + 2 phosphate + 2 H(+). In terms of biological role, catalyzes the ATP-dependent amidation of the two carboxylate groups at positions a and c of cobyrinate, using either L-glutamine or ammonia as the nitrogen source. The sequence is that of Cobyrinate a,c-diamide synthase (cbiA) from Dehalococcoides mccartyi (strain ATCC BAA-2266 / KCTC 15142 / 195) (Dehalococcoides ethenogenes (strain 195)).